The following is a 576-amino-acid chain: High-affinity choline transporter 1 (576 aa).

Residues 6-26 (GIVAIVFFYVLILVVGIWAGR) form a helical membrane-spanning segment. At 27 to 51 (KSKSSKELESEAGAATEEVMLAGRN) the chain is on the cytoplasmic side. Residues 52 to 72 (IGTLVGIFTMTATWVGGAYIN) form a helical membrane-spanning segment. Residues 73–82 (GTAEALYNGG) are Extracellular-facing. The helical transmembrane segment at 83 to 103 (LLGCQAPVGYAISLVMGGLLF) threads the bilayer. The Cytoplasmic segment spans residues 104–126 (AKKMREEGYITMLDPFQHKYGQR). Residues 127–147 (IGGLMYVPALLGETFWTAAIL) form a helical membrane-spanning segment. At 148-165 (SALGATLSVILGIDMNAS) the chain is on the extracellular side. The chain crosses the membrane as a helical span at residues 166–186 (VTLSACIAVFYTFTGGYYAVA). Residues 187–192 (YTDVVQ) are Cytoplasmic-facing. The helical transmembrane segment at 193–213 (LFCIFVGLWVCVPAAMVHDGA) threads the bilayer. The Extracellular portion of the chain corresponds to 214 to 233 (KDISRNAGDWIGEIGGFKET). Residues 234 to 254 (SLWIDCMLLLVFGGIPWQVYF) traverse the membrane as a helical segment. At 255-270 (QRVLSSKTAHGAQTLS) the chain is on the cytoplasmic side. The helical transmembrane segment at 271 to 291 (FVAGVGCILMAIPPALIGAIA) threads the bilayer. The Extracellular segment spans residues 292–319 (RNTDWRMTDYSPWNNGTKVESIPPDKRN). An N-linked (GlcNAc...) asparagine glycan is attached at Asn-306. Residues 320 to 340 (MVVPLVFQYLTPRWVAFIGLG) traverse the membrane as a helical segment. Residues 341–378 (AVSAAVMSSADSSVLSAASMFAHNIWKLTIRPHASEKE) are Cytoplasmic-facing. Residues 379–399 (VIIVMRIAIICVGIMATIMAL) traverse the membrane as a helical segment. Topologically, residues 400 to 408 (TIQSIYGLW) are extracellular. Residues 409–429 (YLCADLVYVILFPQLLCVVYM) traverse the membrane as a helical segment. Residues 430 to 437 (PRSNTYGS) are Cytoplasmic-facing. Residues 438–458 (LAGYAVGLVLRLIGGEPLVSL) form a helical membrane-spanning segment. The Extracellular segment spans residues 459–478 (PAFFHYPMYTDGVQYFPFRT). A helical transmembrane segment spans residues 479-499 (TAMLSSMATIYIVSIQSEKLF). The Cytoplasmic portion of the chain corresponds to 500–576 (KSGRLSPEWD…DQSYYSTNSN (77 aa)). Residues 541 to 576 (APNGTPAPVHPNQQPSDENTLLHPYSDQSYYSTNSN) are disordered. Residues 566–576 (SDQSYYSTNSN) show a composition bias toward polar residues.

The protein belongs to the sodium:solute symporter (SSF) (TC 2.A.21) family. As to expression, detected in the nervous system, including the nerve ring and cholinergic motor neurons of the ventral nerve cord.

Its subcellular location is the membrane. Functionally, imports choline from the extracellular space to the neuron with high affinity. Choline uptake is the rate-limiting step in acetylcholine synthesis. Sodium ion and chloride ion dependent. This chain is High-affinity choline transporter 1 (cho-1), found in Caenorhabditis elegans.